The primary structure comprises 316 residues: Melanocyte-stimulating hormone receptor (316 aa).

Residues 1–37 (MAVQGSQRRLLGSLNSTPTAIPQLGLAANQTGARCLE) lie on the Extracellular side of the membrane. The N-linked (GlcNAc...) asparagine glycan is linked to Asn29. The chain crosses the membrane as a helical span at residues 38-63 (VSIPDGLFLSLGLVSLVENVLVVATI). Residues 64-72 (AKNRNLHSP) are Cytoplasmic-facing. A helical membrane pass occupies residues 73 to 93 (MYCFICCLALSDLLVSGSNVV). Topologically, residues 94–117 (DTLLLLLEAGALAARAAVLQQLDN) are extracellular. The chain crosses the membrane as a helical span at residues 118 to 139 (VIDVITCSSMLSSLCFLGAIAV). Residues 140-162 (DRYISIFYALRYRSIVTLPRARR) lie on the Cytoplasmic side of the membrane. Residues 163–182 (AVAAIWVASVLFSTLFIAYY) form a helical membrane-spanning segment. The Extracellular segment spans residues 183–190 (DHTAVLLC). The helical transmembrane segment at 191-210 (LVVFFLAMLVLMAVLYVHML) threads the bilayer. At 211–239 (ARACQHAQGIARLHKRQRPVHKGFGLKGP) the chain is on the cytoplasmic side. A helical membrane pass occupies residues 240 to 265 (VTLTILLGIFFLCWGPFFLHLTLIVL). Residues 266–278 (CPEHPTCGCIFKN) lie on the Extracellular side of the membrane. The helical transmembrane segment at 279–299 (FNLFLALIICNAIIDPLIYAF) threads the bilayer. Topologically, residues 300–316 (HSQELRRTLKEVLTCSW) are cytoplasmic. Cys314 is lipidated: S-palmitoyl cysteine.

The protein belongs to the G-protein coupled receptor 1 family. In terms of assembly, interacts with MGRN1, but does not undergo MGRN1-mediated ubiquitination; this interaction competes with GNAS-binding and thus inhibits agonist-induced cAMP production. Interacts with OPN3; the interaction results in a decrease in MC1R-mediated cAMP signaling and ultimately a decrease in melanin production in melanocytes.

Its subcellular location is the cell membrane. Its function is as follows. Receptor for MSH (alpha, beta and gamma) and ACTH. The activity of this receptor is mediated by G proteins which activate adenylate cyclase. Mediates melanogenesis, the production of eumelanin (black/brown) and phaeomelanin (red/yellow), via regulation of cAMP signaling in melanocytes. This is Melanocyte-stimulating hormone receptor (MC1R) from Gorilla gorilla gorilla (Western lowland gorilla).